We begin with the raw amino-acid sequence, 293 residues long: MTITASMVKELRERTGAGMMECKKALAETNGDMEAAIELMRKSGAAKADKKAGRIAAEGQVVVALSDDATRAAMVEVNCETDFVAKDENFEKFANRVAEVVLSGAPADVSALMAQNMDGASVEETRAALIAKVGENVQVRRFERLEAAAGGTLGFYRHGNRIGVAVELEGGDAELAKDICMHIAASRPVCVDETQVPQELLDKEREIFAAQAAESGKPAEIIEKMVSGRIKKYLAEITLVGQPFVKDPDKTVGKLLEGAGAKVRRFVRYEVGEGIEKKTENFAEEVMAQAKGA.

Positions 81–84 (TDFV) are involved in Mg(2+) ion dislocation from EF-Tu.

It belongs to the EF-Ts family.

The protein localises to the cytoplasm. Functionally, associates with the EF-Tu.GDP complex and induces the exchange of GDP to GTP. It remains bound to the aminoacyl-tRNA.EF-Tu.GTP complex up to the GTP hydrolysis stage on the ribosome. This is Elongation factor Ts from Thioalkalivibrio sulfidiphilus (strain HL-EbGR7).